A 325-amino-acid polypeptide reads, in one-letter code: Small ribosomal subunit protein uS2 (325 aa).

A compositionally biased stretch (basic and acidic residues) spans 212–226 (KEEQAKAEAERERLA). The disordered stretch occupies residues 212–325 (KEEQAKAEAE…TEPKASTGNW (114 aa)). Composition is skewed to low complexity over residues 234–247 (QPAA…QWAD) and 261–289 (PVTT…TGSG). Residues 290–300 (FNQDDWSVPTT) show a composition bias toward polar residues.

This sequence belongs to the universal ribosomal protein uS2 family. Component of the small ribosomal subunit. Mature ribosomes consist of a small (40S) and a large (60S) subunit. The 40S subunit contains about 33 different proteins and 1 molecule of RNA (18S). The 60S subunit contains about 49 different proteins and 3 molecules of RNA (28S, 5.8S and 5S). Interacts with ribosomal protein S21.

The protein localises to the cytoplasm. In terms of biological role, required for the assembly and/or stability of the 40S ribosomal subunit. Required for the processing of the 20S rRNA-precursor to mature 18S rRNA in a late step of the maturation of 40S ribosomal subunits. In Suberites domuncula (Sponge), this protein is Small ribosomal subunit protein uS2.